The sequence spans 487 residues: Glycogen synthase 2 (487 aa).

ADP-alpha-D-glucose is bound at residue lysine 12.

This sequence belongs to the glycosyltransferase 1 family. Bacterial/plant glycogen synthase subfamily.

It carries out the reaction [(1-&gt;4)-alpha-D-glucosyl](n) + ADP-alpha-D-glucose = [(1-&gt;4)-alpha-D-glucosyl](n+1) + ADP + H(+). Its pathway is glycan biosynthesis; glycogen biosynthesis. Functionally, synthesizes alpha-1,4-glucan chains using ADP-glucose. The polypeptide is Glycogen synthase 2 (Methylococcus capsulatus (strain ATCC 33009 / NCIMB 11132 / Bath)).